We begin with the raw amino-acid sequence, 388 residues long: Cytochrome b (388 aa).

A run of 4 helical transmembrane segments spans residues F32 to M52, W76 to G98, T113 to V133, and F179 to I199. Heme b is bound by residues H82 and H96. 2 residues coordinate heme b: H183 and H197. H202 lines the a ubiquinone pocket. 4 helical membrane-spanning segments follow: residues F226–F246, L290–D310, L322–A342, and F349–P369.

The protein belongs to the cytochrome b family. Fungal cytochrome b-c1 complex contains 10 subunits; 3 respiratory subunits, 2 core proteins and 5 low-molecular weight proteins. Cytochrome b-c1 complex is a homodimer. Heme b serves as cofactor.

The protein resides in the mitochondrion inner membrane. Component of the ubiquinol-cytochrome c reductase complex (complex III or cytochrome b-c1 complex) that is part of the mitochondrial respiratory chain. The b-c1 complex mediates electron transfer from ubiquinol to cytochrome c. Contributes to the generation of a proton gradient across the mitochondrial membrane that is then used for ATP synthesis. The chain is Cytochrome b (cob) from Zymoseptoria tritici (Speckled leaf blotch fungus).